Here is a 222-residue protein sequence, read N- to C-terminus: N-acetyltransferase 8B (222 aa).

Topologically, residues 1–42 (MVSYHICEYQDSDYKSVVDVFTKGAEEYIPSTFRHLLLLPRT) are cytoplasmic. A helical; Signal-anchor for type II membrane protein membrane pass occupies residues 43-67 (LLLLLGVSLALVLVSGSWLLAVVCI). The N-acetyltransferase domain occupies 62 to 217 (LAVVCIFFLL…VGIRFVQLNY (156 aa)). Over 68 to 222 (FFLLPFLWFL…VQLNYSFPSA (155 aa)) the chain is Lumenal. Position 99 is an N6-acetyllysine (Lys-99).

Belongs to the NAT8 family. In terms of processing, acetylation on Lys-99 modulates enzymatic activity.

It localises to the endoplasmic reticulum-Golgi intermediate compartment membrane. The protein resides in the endoplasmic reticulum membrane. It carries out the reaction L-lysyl-[protein] + acetyl-CoA = N(6)-acetyl-L-lysyl-[protein] + CoA + H(+). Its function is as follows. Endoplasmic reticulum (ER)-membrane-bound lysine N-acetyltransferase catalyzing the N6-acetylation of lysine residues in the lumen of the ER in various proteins, including PROM1 and BACE1, using acetyl-CoA as acetyl donor. Thereby, may regulate apoptosis through the acetylation and the regulation of the expression of PROM1. Acetylates and stabilizes BACE1 immature protein, leading to increased steady-state levels in neurons. By acting on BACE1 expression, may regulate amyloid beta-peptide formation. N(6)-lysine acetylation in ER maintains protein homeostasis and regulates reticulophagy. This chain is N-acetyltransferase 8B, found in Rattus norvegicus (Rat).